The primary structure comprises 432 residues: Glutamate-1-semialdehyde 2,1-aminomutase 1 (432 aa).

The residue at position 272 (K272) is an N6-(pyridoxal phosphate)lysine.

It belongs to the class-III pyridoxal-phosphate-dependent aminotransferase family. HemL subfamily. In terms of assembly, homodimer. It depends on pyridoxal 5'-phosphate as a cofactor.

The protein resides in the cytoplasm. The catalysed reaction is (S)-4-amino-5-oxopentanoate = 5-aminolevulinate. It participates in porphyrin-containing compound metabolism; protoporphyrin-IX biosynthesis; 5-aminolevulinate from L-glutamyl-tRNA(Glu): step 2/2. The sequence is that of Glutamate-1-semialdehyde 2,1-aminomutase 1 from Exiguobacterium sibiricum (strain DSM 17290 / CCUG 55495 / CIP 109462 / JCM 13490 / 255-15).